The sequence spans 111 residues: Small ribosomal subunit protein uS10 (111 aa).

This sequence belongs to the universal ribosomal protein uS10 family. As to quaternary structure, part of the 30S ribosomal subunit.

In terms of biological role, involved in the binding of tRNA to the ribosomes. The protein is Small ribosomal subunit protein uS10 of Protochlamydia amoebophila (strain UWE25).